The sequence spans 381 residues: Stearoyl-[acyl-carrier-protein] 9-desaturase 1, chloroplastic (381 aa).

A chloroplast-targeting transit peptide spans 1 to 26; that stretch reads MQVVGTVRVSGCGAVVAPSRRQCRVS. 6 residues coordinate Fe cation: E120, E158, H161, E211, E244, and H247.

This sequence belongs to the fatty acid desaturase type 2 family. Homodimer. Fe(2+) is required as a cofactor.

The protein localises to the plastid. The protein resides in the chloroplast. The catalysed reaction is octadecanoyl-[ACP] + 2 reduced [2Fe-2S]-[ferredoxin] + O2 + 2 H(+) = (9Z)-octadecenoyl-[ACP] + 2 oxidized [2Fe-2S]-[ferredoxin] + 2 H2O. Its pathway is lipid metabolism; fatty acid metabolism. In terms of biological role, converts stearoyl-ACP to oleoyl-ACP by introduction of a cis double bond between carbons 9 and 10 of the acyl chain. This Oryza sativa subsp. indica (Rice) protein is Stearoyl-[acyl-carrier-protein] 9-desaturase 1, chloroplastic.